The sequence spans 266 residues: Putative pyruvate, phosphate dikinase regulatory protein (266 aa).

149–156 (GVSRTSKT) lines the ADP pocket.

It belongs to the pyruvate, phosphate/water dikinase regulatory protein family. PDRP subfamily.

It carries out the reaction N(tele)-phospho-L-histidyl/L-threonyl-[pyruvate, phosphate dikinase] + ADP = N(tele)-phospho-L-histidyl/O-phospho-L-threonyl-[pyruvate, phosphate dikinase] + AMP + H(+). The enzyme catalyses N(tele)-phospho-L-histidyl/O-phospho-L-threonyl-[pyruvate, phosphate dikinase] + phosphate + H(+) = N(tele)-phospho-L-histidyl/L-threonyl-[pyruvate, phosphate dikinase] + diphosphate. Its function is as follows. Bifunctional serine/threonine kinase and phosphorylase involved in the regulation of the pyruvate, phosphate dikinase (PPDK) by catalyzing its phosphorylation/dephosphorylation. This chain is Putative pyruvate, phosphate dikinase regulatory protein, found in Geobacillus kaustophilus (strain HTA426).